The following is a 214-amino-acid chain: Rac-like GTP-binding protein 2 (214 aa).

14 to 21 (GDGAVGKT) contacts GTP. Positions 36–44 (YIPTVFDNF) match the Effector region motif. GTP is bound by residues 61 to 65 (DTAGQ) and 119 to 122 (TKLD).

Belongs to the small GTPase superfamily. Rho family. In terms of processing, may be palmitoylated.

It is found in the cytoplasm. The protein localises to the membrane. Functionally, inactive GDP-bound Rho GTPases reside in the cytosol, are found in a complex with Rho GDP-dissociation inhibitors (Rho GDIs), and are released from the GDI protein in order to translocate to membranes upon activation. The polypeptide is Rac-like GTP-binding protein 2 (RAC2) (Oryza sativa subsp. japonica (Rice)).